The primary structure comprises 572 residues: Urease subunit alpha (572 aa).

Residues 136–572 (GGIDTHIHWI…VPLAQRYFLF (437 aa)) form the Urease domain. Ni(2+) is bound by residues His-141, His-143, and Lys-224. Lys-224 bears the N6-carboxylysine mark. His-226 contributes to the substrate binding site. 2 residues coordinate Ni(2+): His-253 and His-279. His-327 serves as the catalytic Proton donor. Position 367 (Asp-367) interacts with Ni(2+).

The protein belongs to the metallo-dependent hydrolases superfamily. Urease alpha subunit family. In terms of assembly, heterotrimer of UreA (gamma), UreB (beta) and UreC (alpha) subunits. Three heterotrimers associate to form the active enzyme. Ni cation is required as a cofactor. Post-translationally, carboxylation allows a single lysine to coordinate two nickel ions.

Its subcellular location is the cytoplasm. The enzyme catalyses urea + 2 H2O + H(+) = hydrogencarbonate + 2 NH4(+). Its pathway is nitrogen metabolism; urea degradation; CO(2) and NH(3) from urea (urease route): step 1/1. In Actinobacillus pleuropneumoniae (Haemophilus pleuropneumoniae), this protein is Urease subunit alpha.